The sequence spans 591 residues: L-fucose isomerase (591 aa).

Active-site proton acceptor residues include Glu337 and Asp361. Mn(2+) is bound by residues Glu337, Asp361, and His528.

It belongs to the L-fucose isomerase family. Homohexamer. Mn(2+) serves as cofactor.

It is found in the cytoplasm. The enzyme catalyses L-fucose = L-fuculose. It functions in the pathway carbohydrate degradation; L-fucose degradation; L-lactaldehyde and glycerone phosphate from L-fucose: step 1/3. Its function is as follows. Converts the aldose L-fucose into the corresponding ketose L-fuculose. In Salmonella schwarzengrund (strain CVM19633), this protein is L-fucose isomerase.